We begin with the raw amino-acid sequence, 249 residues long: Methylthioribulose-1-phosphate dehydratase (249 aa).

The tract at residues 1–25 is disordered; sequence MVDIKPEQTQEGNNNDHLVQSDDPE. A compositionally biased stretch (polar residues) spans 9–18; the sequence is TQEGNNNDHL. Cysteine 105 is a binding site for substrate. The Zn(2+) site is built by histidine 122 and histidine 124. Glutamate 151 (proton donor/acceptor) is an active-site residue. Histidine 207 is a binding site for Zn(2+).

This sequence belongs to the aldolase class II family. MtnB subfamily. It depends on Zn(2+) as a cofactor.

The protein resides in the cytoplasm. It catalyses the reaction 5-(methylsulfanyl)-D-ribulose 1-phosphate = 5-methylsulfanyl-2,3-dioxopentyl phosphate + H2O. Its pathway is amino-acid biosynthesis; L-methionine biosynthesis via salvage pathway; L-methionine from S-methyl-5-thio-alpha-D-ribose 1-phosphate: step 2/6. Functionally, catalyzes the dehydration of methylthioribulose-1-phosphate (MTRu-1-P) into 2,3-diketo-5-methylthiopentyl-1-phosphate (DK-MTP-1-P). In Arthroderma otae (strain ATCC MYA-4605 / CBS 113480) (Microsporum canis), this protein is Methylthioribulose-1-phosphate dehydratase.